The chain runs to 185 residues: CDP-diacylglycerol--glycerol-3-phosphate 3-phosphatidyltransferase (185 aa).

Transmembrane regions (helical) follow at residues 7-26 (IFLT…AFYL), 33-52 (FITT…DGYL), 89-108 (FWIT…ISAL), and 151-172 (IAAI…IQYL).

The protein belongs to the CDP-alcohol phosphatidyltransferase class-I family.

Its subcellular location is the cell membrane. The catalysed reaction is a CDP-1,2-diacyl-sn-glycerol + sn-glycerol 3-phosphate = a 1,2-diacyl-sn-glycero-3-phospho-(1'-sn-glycero-3'-phosphate) + CMP + H(+). It participates in phospholipid metabolism; phosphatidylglycerol biosynthesis; phosphatidylglycerol from CDP-diacylglycerol: step 1/2. Its function is as follows. This protein catalyzes the committed step to the synthesis of the acidic phospholipids. The polypeptide is CDP-diacylglycerol--glycerol-3-phosphate 3-phosphatidyltransferase (pgsA) (Haemophilus influenzae (strain ATCC 51907 / DSM 11121 / KW20 / Rd)).